The primary structure comprises 460 residues: Omega-3 fatty acid desaturase, chloroplastic (460 aa).

The Histidine box-1 signature appears at 177–181; that stretch reads HDCGH. A Histidine box-2 motif is present at residues 213–217; the sequence is HRTHH. Positions 380-384 match the Histidine box-3 motif; the sequence is HVIHH.

The protein belongs to the fatty acid desaturase type 1 family.

The protein localises to the plastid. The protein resides in the chloroplast membrane. The protein operates within lipid metabolism; polyunsaturated fatty acid biosynthesis. Functionally, chloroplast omega-3 fatty acid desaturase introduces the third double bond in the biosynthesis of 16:3 and 18:3 fatty acids, important constituents of plant membranes. It is thought to use ferredoxin as an electron donor and to act on fatty acids esterified to galactolipids, sulfolipids and phosphatidylglycerol. This chain is Omega-3 fatty acid desaturase, chloroplastic (FAD7A-1), found in Ricinus communis (Castor bean).